A 288-amino-acid chain; its full sequence is MGPRSSNRRSNAKDGFKGSNKASKFPLPLAMWDFGHCNPNACSGKRLERLGCVRNLRIGQKFRGVVITPNGKVPVSPADKEYFDNGGASVVECSWARIEEIPFSRIGGRCERLLPYLVASNPVNYGRPWRLNCAEALAACMYIVGYPNEARLLMDNFKWGHSFFEVNEELLDIYAQCHDAQDIQEKEKKYLEEMEASYQEQRNQTTDDIWSAGNLNHKPTLNTSSTHSNSEESRSPLHEPSEASLAHDEHSIPTDDNEETLTNLQANDVDEDEVWRKIVRMKVHSTDT.

Residues Ser43, Val91, Leu114, and Trp129 each coordinate S-adenosyl-L-methionine. The segment covering 209–221 (IWSAGNLNHKPTL) has biased composition (polar residues). Positions 209-267 (IWSAGNLNHKPTLNTSSTHSNSEESRSPLHEPSEASLAHDEHSIPTDDNEETLTNLQAN) are disordered. The segment covering 229–253 (NSEESRSPLHEPSEASLAHDEHSIP) has biased composition (basic and acidic residues).

Belongs to the TDD superfamily. TSR3 family.

The protein localises to the cytoplasm. It is found in the nucleus. It catalyses the reaction an N(1)-methylpseudouridine in rRNA + S-adenosyl-L-methionine = N(1)-methyl-N(3)-[(3S)-3-amino-3-carboxypropyl]pseudouridine in rRNA + S-methyl-5'-thioadenosine + H(+). The enzyme catalyses N(1)-methylpseudouridine(1191) in yeast 18S rRNA + S-adenosyl-L-methionine = N(1)-methyl-N(3)-[(3S)-3-amino-3-carboxypropyl]pseudouridine(1191) in yeast 18S rRNA + S-methyl-5'-thioadenosine + H(+). Aminocarboxypropyltransferase that catalyzes the aminocarboxypropyl transfer on pseudouridine at position 1191 (Psi1191) in 18S rRNA. It constitutes the last step in biosynthesis of the hypermodified N1-methyl-N3-(3-amino-3-carboxypropyl) pseudouridine (m1acp3-Psi) conserved in eukaryotic 18S rRNA. Required for processing 35S pre-rRNA at site D. The sequence is that of 18S rRNA aminocarboxypropyltransferase from Schizosaccharomyces pombe (strain 972 / ATCC 24843) (Fission yeast).